A 215-amino-acid polypeptide reads, in one-letter code: MYSEKKHLIQSSINSRDIDKSRSAVPTVVEQSGRGERAFDIYSRLLRERIIFLGTGINDQVSDSLVAQLLFLEAEDPHKDIQIYINSPGGSVTAGLAIYDTMQQISPDVVTICFGVAASMGAFLLSGGAKGKRLALPNSRIMIHQPLGGAQGQAVEIEIQAKEILFLKKTLNSLLAKHTNQSLEKINEDTERDYFLSPEEAVEYGLIDKVIKNDK.

Ser119 serves as the catalytic Nucleophile. Residue His144 is part of the active site.

Belongs to the peptidase S14 family. As to quaternary structure, fourteen ClpP subunits assemble into 2 heptameric rings which stack back to back to give a disk-like structure with a central cavity, resembling the structure of eukaryotic proteasomes.

It is found in the cytoplasm. It carries out the reaction Hydrolysis of proteins to small peptides in the presence of ATP and magnesium. alpha-casein is the usual test substrate. In the absence of ATP, only oligopeptides shorter than five residues are hydrolyzed (such as succinyl-Leu-Tyr-|-NHMec, and Leu-Tyr-Leu-|-Tyr-Trp, in which cleavage of the -Tyr-|-Leu- and -Tyr-|-Trp bonds also occurs).. Its function is as follows. Cleaves peptides in various proteins in a process that requires ATP hydrolysis. Has a chymotrypsin-like activity. Plays a major role in the degradation of misfolded proteins. In Prochlorococcus marinus subsp. pastoris (strain CCMP1986 / NIES-2087 / MED4), this protein is ATP-dependent Clp protease proteolytic subunit 3.